The chain runs to 351 residues: Photosystem II D2 protein (351 aa).

The chain crosses the membrane as a helical span at residues 39–59; that stretch reads CAFLALGGWLTGTTFVTSWYT. Histidine 116 is a binding site for chlorophyll a. The helical transmembrane segment at 123 to 139 threads the bilayer; the sequence is GFMLRQFEIARLVGIRP. Pheophytin a contacts are provided by glutamine 128 and asparagine 141. Residues 151–164 form a helical membrane-spanning segment; it reads VFVSVFLMYPLGQS. Histidine 196 is a chlorophyll a binding site. Residues 206 to 226 form a helical membrane-spanning segment; sequence GALLCAIHGATVENTLFEDGD. A plastoquinone-binding residues include histidine 213 and phenylalanine 260. Histidine 213 lines the Fe cation pocket. Histidine 267 contacts Fe cation. A helical transmembrane segment spans residues 277 to 293; the sequence is GLWMSAVGIVGLALNLR.

It belongs to the reaction center PufL/M/PsbA/D family. As to quaternary structure, PSII is composed of 1 copy each of membrane proteins PsbA, PsbB, PsbC, PsbD, PsbE, PsbF, PsbH, PsbI, PsbJ, PsbK, PsbL, PsbM, PsbT, PsbX, PsbY, PsbZ, Psb30/Ycf12, peripheral proteins PsbO, CyanoQ (PsbQ), PsbU, PsbV and a large number of cofactors. It forms dimeric complexes. Requires The D1/D2 heterodimer binds P680, chlorophylls that are the primary electron donor of PSII, and subsequent electron acceptors. It shares a non-heme iron and each subunit binds pheophytin, quinone, additional chlorophylls, carotenoids and lipids. There is also a Cl(-1) ion associated with D1 and D2, which is required for oxygen evolution. The PSII complex binds additional chlorophylls, carotenoids and specific lipids. as cofactor.

It localises to the cellular thylakoid membrane. It catalyses the reaction 2 a plastoquinone + 4 hnu + 2 H2O = 2 a plastoquinol + O2. Its function is as follows. Photosystem II (PSII) is a light-driven water:plastoquinone oxidoreductase that uses light energy to abstract electrons from H(2)O, generating O(2) and a proton gradient subsequently used for ATP formation. It consists of a core antenna complex that captures photons, and an electron transfer chain that converts photonic excitation into a charge separation. The D1/D2 (PsbA/PsbD) reaction center heterodimer binds P680, the primary electron donor of PSII as well as several subsequent electron acceptors. D2 is needed for assembly of a stable PSII complex. This Nostoc punctiforme (strain ATCC 29133 / PCC 73102) protein is Photosystem II D2 protein.